The primary structure comprises 263 residues: Retinoic acid early transcript 1E (263 aa).

The first 30 residues, 1–30, serve as a signal peptide directing secretion; that stretch reads MRRISLTSSPVRLLLFLLLLLIALEIMVGG. The segment at 31–116 is MHC class I alpha-1 like; down-regulates the cell surface expression of KLRK1; sequence HSLCFNFTIK…DIKPQIKTSD (86 aa). Topologically, residues 31–225 are extracellular; the sequence is HSLCFNFTIK…IHWSSSSLPD (195 aa). N-linked (GlcNAc...) asparagine glycans are attached at residues Asn-36, Asn-154, and Asn-212. The segment at 117–207 is MHC class I alpha-2 like; down-regulates the cell surface expression of KLRK1; it reads PSTLQVEMFC…GHWEAMPEPT (91 aa). Residues Cys-126 and Cys-189 are joined by a disulfide bond. Residues 226 to 248 traverse the membrane as a helical segment; that stretch reads RWIILGAFILLVLMGIVLICVWW. Topologically, residues 249-263 are cytoplasmic; that stretch reads QNGEWQAGLWPLRTS.

The protein belongs to the MHC class I family. As to quaternary structure, binds to KLRK1/NKG2D. (Microbial infection) Contrary to other family members, does not interact with CMV glycoprotein UL16. As to expression, predominantly expressed in the skin, but also expressed in testis and trachea. Up-regulated in tumor cells of different origins. Expression progressively decreased after treatment of tumor cells with retinoic acid.

The protein localises to the membrane. Its subcellular location is the secreted. In terms of biological role, binds and activates the KLRK1/NKG2D receptor, mediating natural killer cell cytotoxicity. The protein is Retinoic acid early transcript 1E of Homo sapiens (Human).